The sequence spans 338 residues: Glyceraldehyde-3-phosphate dehydrogenase (338 aa).

Residues 11–12 (TI) and Gly111 contribute to the NAD(+) site. Position 140–142 (140–142 (SCN)) interacts with D-glyceraldehyde 3-phosphate. Cys141 functions as the Nucleophile in the catalytic mechanism. NAD(+) is bound at residue Arg169. Residues 170–195 (GSDPSEVKKGPINSIVPNPPKVPSHH) form a disordered region. Position 195–196 (195–196 (HG)) interacts with D-glyceraldehyde 3-phosphate. NAD(+) is bound at residue Gln302.

This sequence belongs to the glyceraldehyde-3-phosphate dehydrogenase family. In terms of assembly, homotetramer.

The protein localises to the cytoplasm. The catalysed reaction is D-glyceraldehyde 3-phosphate + phosphate + NADP(+) = (2R)-3-phospho-glyceroyl phosphate + NADPH + H(+). It carries out the reaction D-glyceraldehyde 3-phosphate + phosphate + NAD(+) = (2R)-3-phospho-glyceroyl phosphate + NADH + H(+). Its pathway is carbohydrate degradation; glycolysis; pyruvate from D-glyceraldehyde 3-phosphate: step 1/5. The sequence is that of Glyceraldehyde-3-phosphate dehydrogenase from Methanobrevibacter smithii (strain ATCC 35061 / DSM 861 / OCM 144 / PS).